A 668-amino-acid polypeptide reads, in one-letter code: tRNA 5-methylaminomethyl-2-thiouridine biosynthesis bifunctional protein MnmC (668 aa).

The tract at residues 1–245 is tRNA (mnm(5)s(2)U34)-methyltransferase; the sequence is MKHYSIQPAN…KREMLCGVME (245 aa). The tract at residues 270-668 is FAD-dependent cmnm(5)s(2)U34 oxidoreductase; the sequence is IGGGIASALL…LLKGKAVKAG (399 aa).

In the N-terminal section; belongs to the methyltransferase superfamily. tRNA (mnm(5)s(2)U34)-methyltransferase family. This sequence in the C-terminal section; belongs to the DAO family. The cofactor is FAD.

The protein resides in the cytoplasm. The catalysed reaction is 5-aminomethyl-2-thiouridine(34) in tRNA + S-adenosyl-L-methionine = 5-methylaminomethyl-2-thiouridine(34) in tRNA + S-adenosyl-L-homocysteine + H(+). Functionally, catalyzes the last two steps in the biosynthesis of 5-methylaminomethyl-2-thiouridine (mnm(5)s(2)U) at the wobble position (U34) in tRNA. Catalyzes the FAD-dependent demodification of cmnm(5)s(2)U34 to nm(5)s(2)U34, followed by the transfer of a methyl group from S-adenosyl-L-methionine to nm(5)s(2)U34, to form mnm(5)s(2)U34. In Shigella flexneri serotype 5b (strain 8401), this protein is tRNA 5-methylaminomethyl-2-thiouridine biosynthesis bifunctional protein MnmC.